The primary structure comprises 455 residues: 3-isopropylmalate dehydratase large subunit (455 aa).

[4Fe-4S] cluster-binding residues include Cys-337, Cys-397, and Cys-400.

It belongs to the aconitase/IPM isomerase family. LeuC type 1 subfamily. In terms of assembly, heterodimer of LeuC and LeuD. [4Fe-4S] cluster serves as cofactor.

The catalysed reaction is (2R,3S)-3-isopropylmalate = (2S)-2-isopropylmalate. Its pathway is amino-acid biosynthesis; L-leucine biosynthesis; L-leucine from 3-methyl-2-oxobutanoate: step 2/4. In terms of biological role, catalyzes the isomerization between 2-isopropylmalate and 3-isopropylmalate, via the formation of 2-isopropylmaleate. The chain is 3-isopropylmalate dehydratase large subunit from Leuconostoc citreum (strain KM20).